The sequence spans 732 residues: Polyribonucleotide nucleotidyltransferase (732 aa).

Mg(2+) contacts are provided by Asp516 and Asp522. In terms of domain architecture, KH spans 582 to 642 (PSSHTITVHP…PKVIAACDYI (61 aa)). Positions 659–726 (GDILKGKIKR…KGHKIELGLR (68 aa)) constitute an S1 motif domain.

The protein belongs to the polyribonucleotide nucleotidyltransferase family. The cofactor is Mg(2+).

The protein localises to the cytoplasm. The enzyme catalyses RNA(n+1) + phosphate = RNA(n) + a ribonucleoside 5'-diphosphate. Functionally, involved in mRNA degradation. Catalyzes the phosphorolysis of single-stranded polyribonucleotides processively in the 3'- to 5'-direction. This is Polyribonucleotide nucleotidyltransferase from Nitratiruptor sp. (strain SB155-2).